The primary structure comprises 687 residues: Ataxin-1-like (687 aa).

Over residues Met-1–Leu-19 the composition is skewed to basic and acidic residues. Disordered regions lie at residues Met-1–Ser-46, Ala-185–Ala-223, and Ser-261–Ser-294. Residues Pro-20–Ser-197 form an interaction with NCOR2 and ATXN1 region. The tract at residues Pro-20 to Ser-197 is self-association. Polar residues-rich tracts occupy residues Arg-28–Ser-43 and Phe-198–Pro-219. The span at Arg-272–Glu-283 shows a compositional bias: basic and acidic residues. At Ser-282 the chain carries Phosphoserine. Thr-328 is subject to Phosphothreonine. The tract at residues Asp-356 to Arg-379 is disordered. At Ser-359 the chain carries Phosphoserine. Positions Pro-455–Asn-586 constitute an AXH domain. The tract at residues Ser-587–Pro-649 is disordered.

It belongs to the ATXN1 family. In terms of assembly, homodimer. Interacts (via AXH domain) with NCOR2. Interacts with ATXN1 and CIC. Directly interacts with RBPJ; this interaction is disrupted in the presence of Notch intracellular domain. Competes with ATXN1 for RBPJ-binding. Found in a complex with CIC and ATXN1. As to expression, expressed in the cortex and hypothalamus (at protein level). Expressed in neuronal cells. Highly expressed in Purkinje cells of cerebellum.

Its subcellular location is the nucleus. It localises to the cell projection. The protein localises to the dendrite. Chromatin-binding factor that repress Notch signaling in the absence of Notch intracellular domain by acting as a CBF1 corepressor. Binds to the HEY promoter and might assist, along with NCOR2, RBPJ-mediated repression. Can suppress the cytotoxicity of ATXN1 in spinocerebellar ataxia type 1 (SCA1). In concert with CIC and ATXN1, involved in brain development. The protein is Ataxin-1-like (Atxn1l) of Mus musculus (Mouse).